Reading from the N-terminus, the 211-residue chain is ATP-dependent Clp protease proteolytic subunit (211 aa).

Residue S114 is the Nucleophile of the active site. H139 is an active-site residue.

The protein belongs to the peptidase S14 family. In terms of assembly, fourteen ClpP subunits assemble into 2 heptameric rings which stack back to back to give a disk-like structure with a central cavity, resembling the structure of eukaryotic proteasomes.

Its subcellular location is the cytoplasm. It carries out the reaction Hydrolysis of proteins to small peptides in the presence of ATP and magnesium. alpha-casein is the usual test substrate. In the absence of ATP, only oligopeptides shorter than five residues are hydrolyzed (such as succinyl-Leu-Tyr-|-NHMec, and Leu-Tyr-Leu-|-Tyr-Trp, in which cleavage of the -Tyr-|-Leu- and -Tyr-|-Trp bonds also occurs).. Functionally, cleaves peptides in various proteins in a process that requires ATP hydrolysis. Has a chymotrypsin-like activity. Plays a major role in the degradation of misfolded proteins. The sequence is that of ATP-dependent Clp protease proteolytic subunit from Pseudomonas fluorescens (strain ATCC BAA-477 / NRRL B-23932 / Pf-5).